Consider the following 339-residue polypeptide: Phenylalanine--tRNA ligase alpha subunit (339 aa).

Glutamate 254 contributes to the Mg(2+) binding site.

It belongs to the class-II aminoacyl-tRNA synthetase family. Phe-tRNA synthetase alpha subunit type 1 subfamily. As to quaternary structure, tetramer of two alpha and two beta subunits. Mg(2+) serves as cofactor.

Its subcellular location is the cytoplasm. It catalyses the reaction tRNA(Phe) + L-phenylalanine + ATP = L-phenylalanyl-tRNA(Phe) + AMP + diphosphate + H(+). This Dictyoglomus thermophilum (strain ATCC 35947 / DSM 3960 / H-6-12) protein is Phenylalanine--tRNA ligase alpha subunit.